We begin with the raw amino-acid sequence, 228 residues long: Adapter protein MecA (228 aa).

Belongs to the MecA family. Homodimer.

Enables the recognition and targeting of unfolded and aggregated proteins to the ClpC protease or to other proteins involved in proteolysis. In Lacticaseibacillus paracasei (strain ATCC 334 / BCRC 17002 / CCUG 31169 / CIP 107868 / KCTC 3260 / NRRL B-441) (Lactobacillus paracasei), this protein is Adapter protein MecA.